The primary structure comprises 1128 residues: Adipocyte enhancer-binding protein 1 (1128 aa).

Residues 1-25 (MAAVRTASLLCGLLALLALCPEGSP) form the signal peptide. The interval 40–368 (GFLSEFETQS…PRKGEELEEE (329 aa)) is disordered. Residues 77 to 109 (PRADAEAPPEKNKDKEKKGKKDKGPKAAKHLEG) show a composition bias toward basic and acidic residues. Residues 113 to 163 (PTKKPKEKPPKATKKPKEKPPKATKKPKEKPPKATKKPKEKPPKATKRPSA) show a composition bias toward basic residues. 2 stretches are compositionally biased toward polar residues: residues 178–187 (RSLTSPSNPG) and 198–209 (TSLNTWQGQGEE). A compositionally biased stretch (basic residues) spans 249 to 261 (RQKQPRPTPSRKR). 2 stretches are compositionally biased toward basic and acidic residues: residues 267–282 (PEEK…EVDP) and 327–363 (EELK…RKGE). Positions 375 to 532 (IKCPPIGMES…LCMRLEVLGC (158 aa)) constitute an F5/8 type C domain. The required for DNA-binding and interaction with NFKBIA stretch occupies residues 382 to 547 (MESHRIEDNQ…YSYYAQNEVV (166 aa)). Interaction with MAPK1 and MAPK3 regions lie at residues 413 to 616 (AGAN…TAGM) and 998 to 1128 (DPSR…FGDF). Asn-520 carries N-linked (GlcNAc...) asparagine glycosylation. The interaction with PTEN stretch occupies residues 547–977 (VTTDSLDFRH…TQCNFILARS (431 aa)). One can recognise a Peptidase M14 domain in the interval 555–896 (RHHSYKDMRQ…EALLTFMEQV (342 aa)). The required for transcriptional repression stretch occupies residues 933-1128 (DYWRILNPGE…ETYTVNFGDF (196 aa)). Positions 1027-1056 (LRRLNSTTGPATSPTPALTLPPSPTPGSTS) are disordered. Residues 1030–1044 (LNSTTGPATSPTPAL) show a composition bias toward low complexity.

Belongs to the peptidase M14 family. In terms of assembly, interacts with different types of collagen, including collagens I, III, and V. Interacts with GNG5, NFKBIA, MAPK1, MAPK3 and PTEN. May interact with calmodulin. Interaction with MAPK1 may stimulate DNA-binding. Binds to DNA in vitro. Phosphorylated by MAPK1 in vitro. Expressed in aorta.

It localises to the secreted. Its function is as follows. As a positive regulator of collagen fibrillogenesis, it is probably involved in the organization and remodeling of the extracellular matrix. May positively regulate MAP-kinase activity in adipocytes, leading to enhanced adipocyte proliferation and reduced adipocyte differentiation. May also positively regulate NF-kappa-B activity in macrophages by promoting the phosphorylation and subsequent degradation of I-kappa-B-alpha (NFKBIA), leading to enhanced macrophage inflammatory responsiveness. Can act as a transcriptional repressor. The polypeptide is Adipocyte enhancer-binding protein 1 (Aebp1) (Rattus norvegicus (Rat)).